The chain runs to 296 residues: Tyrosine recombinase XerC (296 aa).

The region spanning Met1–Met84 is the Core-binding (CB) domain. Residues Tyr105–Leu286 form the Tyr recombinase domain. Residues Arg145, Lys169, His238, Arg241, and His264 contribute to the active site. The O-(3'-phospho-DNA)-tyrosine intermediate role is filled by Tyr273.

Belongs to the 'phage' integrase family. XerC subfamily. Forms a cyclic heterotetrameric complex composed of two molecules of XerC and two molecules of XerD.

The protein resides in the cytoplasm. Site-specific tyrosine recombinase, which acts by catalyzing the cutting and rejoining of the recombining DNA molecules. The XerC-XerD complex is essential to convert dimers of the bacterial chromosome into monomers to permit their segregation at cell division. It also contributes to the segregational stability of plasmids. This chain is Tyrosine recombinase XerC, found in Staphylococcus epidermidis (strain ATCC 35984 / DSM 28319 / BCRC 17069 / CCUG 31568 / BM 3577 / RP62A).